A 393-amino-acid chain; its full sequence is Cytochrome b (393 aa).

Transmembrane regions (helical) follow at residues Phe32 to Met52, Trp76 to Gly98, Val113 to Val133, and Phe179 to Ile199. Heme b-binding residues include His82 and His96. Positions 183 and 197 each coordinate heme b. His202 is a binding site for a ubiquinone. 4 consecutive transmembrane segments (helical) span residues Phe226 to Phe246, Leu290 to Asp310, Leu322 to Ala342, and Phe349 to Pro369.

This sequence belongs to the cytochrome b family. As to quaternary structure, fungal cytochrome b-c1 complex contains 10 subunits; 3 respiratory subunits, 2 core proteins and 5 low-molecular weight proteins. Cytochrome b-c1 complex is a homodimer. Requires heme b as cofactor.

It is found in the mitochondrion inner membrane. Its function is as follows. Component of the ubiquinol-cytochrome c reductase complex (complex III or cytochrome b-c1 complex) that is part of the mitochondrial respiratory chain. The b-c1 complex mediates electron transfer from ubiquinol to cytochrome c. Contributes to the generation of a proton gradient across the mitochondrial membrane that is then used for ATP synthesis. In Venturia inaequalis (Apple scab fungus), this protein is Cytochrome b (COB).